The following is a 485-amino-acid chain: Glycogen synthase (485 aa).

Lys-20 provides a ligand contact to ADP-alpha-D-glucose.

Belongs to the glycosyltransferase 1 family. Bacterial/plant glycogen synthase subfamily.

It catalyses the reaction [(1-&gt;4)-alpha-D-glucosyl](n) + ADP-alpha-D-glucose = [(1-&gt;4)-alpha-D-glucosyl](n+1) + ADP + H(+). Its pathway is glycan biosynthesis; glycogen biosynthesis. Its function is as follows. Synthesizes alpha-1,4-glucan chains using ADP-glucose. This chain is Glycogen synthase, found in Vibrio vulnificus (strain YJ016).